Reading from the N-terminus, the 391-residue chain is Cyclin-A1 (391 aa).

The protein belongs to the cyclin family. Cyclin AB subfamily. Interacts with the CDK1 and the CDK2 protein kinases to form a serine/threonine kinase holoenzyme complex. The cyclin subunit imparts substrate specificity to the complex.

It is found in the nucleus. In terms of biological role, may be involved in the control of the cell cycle at the G1/S (start) and G2/M (mitosis) transitions. This chain is Cyclin-A1 (ccna1), found in Carassius auratus (Goldfish).